We begin with the raw amino-acid sequence, 195 residues long: ATP-dependent Clp protease proteolytic subunit (195 aa).

S101 (nucleophile) is an active-site residue. H126 is a catalytic residue.

It belongs to the peptidase S14 family. In terms of assembly, component of the chloroplastic Clp protease core complex.

Its subcellular location is the plastid. The protein resides in the chloroplast stroma. It carries out the reaction Hydrolysis of proteins to small peptides in the presence of ATP and magnesium. alpha-casein is the usual test substrate. In the absence of ATP, only oligopeptides shorter than five residues are hydrolyzed (such as succinyl-Leu-Tyr-|-NHMec, and Leu-Tyr-Leu-|-Tyr-Trp, in which cleavage of the -Tyr-|-Leu- and -Tyr-|-Trp bonds also occurs).. In terms of biological role, cleaves peptides in various proteins in a process that requires ATP hydrolysis. Has a chymotrypsin-like activity. Plays a major role in the degradation of misfolded proteins. This is ATP-dependent Clp protease proteolytic subunit from Oltmannsiellopsis viridis (Marine flagellate).